We begin with the raw amino-acid sequence, 437 residues long: MRVPTHIIVAASAWGSRLVSIFIQFYSIKILLDLLGTEGYAVFTVIGSLVGWFLLADFGLGNSLQNQISYRRANHQEYQDLVLSAVIAIIPIFILFIILILTLSPYISEFLLGGFDFLNNNQRSNIFKVASFIFLTTSIGNLAYKIWFSEHKGWVSNIIPALSSIVGLVFLMRLPSDGSNISEDIIFSIYCFYIPAAFFGVISTLFKVIPYLKCKNFLNKLTLYTLIKNGGGFFLFSVLSALVLQVDYIVMSQTLVERDLVTYNIMSKTFGLINFIYAALLQSLWPVCAEASSKLRFDNFYKIEKKYISFGFIIVIASSFVIFLLKDFIVNILAPGKDFYFPISLIILFSFYQVVRVWTDTYAMFLMSIGKLKPLWISVPFQAVLSGSLQWVGAVNYGLVGLLCGLIASFLITVSWWLPFSFRSTVDRIVKDKRLDE.

12 helical membrane-spanning segments follow: residues 3–23 (VPTH…SIFI), 41–61 (AVFT…FGLG), 81–101 (LVLS…ILIL), 129–149 (VASF…IWFS), 152–172 (KGWV…VFLM), 185–205 (IIFS…ISTL), 231–251 (GGFF…YIVM), 269–289 (TFGL…PVCA), 310–330 (FGFI…DFIV), 332–352 (ILAP…FSFY), 375–395 (LWIS…VGAV), and 398–418 (GLVG…SWWL).

It is found in the cell inner membrane. It participates in bacterial outer membrane biogenesis; LPS O-antigen biosynthesis. Its function is as follows. May be involved in the translocation process of the nascent O-polysaccharide molecules and/or its ligation to lipid A core units. This Yersinia pseudotuberculosis protein is Putative O-antigen export protein (rfbX).